Consider the following 78-residue polypeptide: Large ribosomal subunit protein bL28B (78 aa).

The protein belongs to the bacterial ribosomal protein bL28 family.

This is Large ribosomal subunit protein bL28B (rpmB2) from Streptomyces coelicolor (strain ATCC BAA-471 / A3(2) / M145).